An 871-amino-acid polypeptide reads, in one-letter code: Alanine--tRNA ligase (871 aa).

Zn(2+) is bound by residues His561, His565, Cys662, and His666.

This sequence belongs to the class-II aminoacyl-tRNA synthetase family. Zn(2+) is required as a cofactor.

Its subcellular location is the cytoplasm. The enzyme catalyses tRNA(Ala) + L-alanine + ATP = L-alanyl-tRNA(Ala) + AMP + diphosphate. Catalyzes the attachment of alanine to tRNA(Ala) in a two-step reaction: alanine is first activated by ATP to form Ala-AMP and then transferred to the acceptor end of tRNA(Ala). Also edits incorrectly charged Ser-tRNA(Ala) and Gly-tRNA(Ala) via its editing domain. The protein is Alanine--tRNA ligase of Dechloromonas aromatica (strain RCB).